The primary structure comprises 491 residues: Serine hydroxymethyltransferase (491 aa).

(6S)-5,6,7,8-tetrahydrofolate contacts are provided by residues Leu173 and 177 to 179; that span reads GHL. The residue at position 285 (Lys285) is an N6-(pyridoxal phosphate)lysine.

This sequence belongs to the SHMT family. In terms of assembly, homodimer. Pyridoxal 5'-phosphate is required as a cofactor.

It is found in the cytoplasm. The enzyme catalyses (6R)-5,10-methylene-5,6,7,8-tetrahydrofolate + glycine + H2O = (6S)-5,6,7,8-tetrahydrofolate + L-serine. It functions in the pathway one-carbon metabolism; tetrahydrofolate interconversion. It participates in amino-acid biosynthesis; glycine biosynthesis; glycine from L-serine: step 1/1. In terms of biological role, catalyzes the reversible interconversion of serine and glycine with tetrahydrofolate (THF) serving as the one-carbon carrier. This reaction serves as the major source of one-carbon groups required for the biosynthesis of purines, thymidylate, methionine, and other important biomolecules. Also exhibits THF-independent aldolase activity toward beta-hydroxyamino acids, producing glycine and aldehydes, via a retro-aldol mechanism. The chain is Serine hydroxymethyltransferase from Cutibacterium acnes (strain DSM 16379 / KPA171202) (Propionibacterium acnes).